The primary structure comprises 330 residues: D-alanine--D-alanine ligase (330 aa).

The ATP-grasp domain maps to 121–321 (NHYLKDFGVK…IKDVMTDIIE (201 aa)). Residue 149–204 (VTRLGLPIFVKPNDGGSSFGVTKVKEVSAIQPAIAKAFGEGREVILERFIDGTEVT) coordinates ATP. Residues aspartate 275, glutamate 288, and asparagine 290 each coordinate Mg(2+).

This sequence belongs to the D-alanine--D-alanine ligase family. The cofactor is Mg(2+). Mn(2+) is required as a cofactor.

The protein resides in the cytoplasm. The catalysed reaction is 2 D-alanine + ATP = D-alanyl-D-alanine + ADP + phosphate + H(+). It functions in the pathway cell wall biogenesis; peptidoglycan biosynthesis. Its function is as follows. Cell wall formation. The chain is D-alanine--D-alanine ligase from Parabacteroides distasonis (strain ATCC 8503 / DSM 20701 / CIP 104284 / JCM 5825 / NCTC 11152).